The primary structure comprises 156 residues: Low-salt glycan biosynthesis protein Agl8 (156 aa).

Residues 14–15 and arginine 47 each bind substrate; that span reads RI. Residues 25–156 enclose the Nudix hydrolase domain; that stretch reads ANVPLVSVDL…YVERYLDALD (132 aa). Residues glycine 60, glutamate 80, and glutamine 130 each coordinate Mg(2+). Positions 61–82 match the Nudix box motif; it reads GTVFKNETLTDALYRVADEELG.

The protein belongs to the Nudix hydrolase family. Mg(2+) is required as a cofactor.

Its pathway is protein modification; protein glycosylation. It functions in the pathway cell surface structure biogenesis; S-layer biogenesis. Nudix hydrolase involved in N-glycan biosynthetic pathway that takes place under low-salt conditions (1.75 M instead of 3.4 M). Participates in the formation of the tetrasaccharide present at 'Asn-532' of S-layer glycoprotein Csg, consisting of a sulfated hexose, 2 hexoses and rhamnose. Mediates attachment of sugar 3 in the tetrasaccharide. The chain is Low-salt glycan biosynthesis protein Agl8 (agl8) from Haloferax volcanii (strain ATCC 29605 / DSM 3757 / JCM 8879 / NBRC 14742 / NCIMB 2012 / VKM B-1768 / DS2) (Halobacterium volcanii).